A 285-amino-acid chain; its full sequence is Bifunctional protein FolD 2 (285 aa).

NADP(+) is bound by residues 164–166, S189, and V230; that span reads GRS.

Belongs to the tetrahydrofolate dehydrogenase/cyclohydrolase family. Homodimer.

It carries out the reaction (6R)-5,10-methylene-5,6,7,8-tetrahydrofolate + NADP(+) = (6R)-5,10-methenyltetrahydrofolate + NADPH. The enzyme catalyses (6R)-5,10-methenyltetrahydrofolate + H2O = (6R)-10-formyltetrahydrofolate + H(+). It functions in the pathway one-carbon metabolism; tetrahydrofolate interconversion. In terms of biological role, catalyzes the oxidation of 5,10-methylenetetrahydrofolate to 5,10-methenyltetrahydrofolate and then the hydrolysis of 5,10-methenyltetrahydrofolate to 10-formyltetrahydrofolate. The protein is Bifunctional protein FolD 2 of Geobacter metallireducens (strain ATCC 53774 / DSM 7210 / GS-15).